We begin with the raw amino-acid sequence, 120 residues long: Aspartate 1-decarboxylase (120 aa).

Serine 25 serves as the catalytic Schiff-base intermediate with substrate; via pyruvic acid. Serine 25 is modified (pyruvic acid (Ser)). Residue threonine 57 participates in substrate binding. Residue tyrosine 58 is the Proton donor of the active site. Residue 72 to 74 participates in substrate binding; that stretch reads GAA.

Belongs to the PanD family. In terms of assembly, heterooctamer of four alpha and four beta subunits. Pyruvate is required as a cofactor. Post-translationally, is synthesized initially as an inactive proenzyme, which is activated by self-cleavage at a specific serine bond to produce a beta-subunit with a hydroxyl group at its C-terminus and an alpha-subunit with a pyruvoyl group at its N-terminus.

The protein localises to the cytoplasm. It catalyses the reaction L-aspartate + H(+) = beta-alanine + CO2. Its pathway is cofactor biosynthesis; (R)-pantothenate biosynthesis; beta-alanine from L-aspartate: step 1/1. Catalyzes the pyruvoyl-dependent decarboxylation of aspartate to produce beta-alanine. The protein is Aspartate 1-decarboxylase of Helicobacter hepaticus (strain ATCC 51449 / 3B1).